The primary structure comprises 87 residues: U14-lycotoxin-Ls1b (87 aa).

The first 20 residues, 1–20 (MNSKVFVVLLLLALSTCVLS), serve as a signal peptide directing secretion. In terms of domain architecture, WAP spans 21 to 66 (EKYCPTPRNTSCKKMNIRNNCCRDSDCTSNAFCCAEPCGNFCHKAS). 5 cysteine pairs are disulfide-bonded: Cys24–Cys54, Cys32–Cys58, Cys41–Cys53, Cys42–Cys80, and Cys47–Cys62.

Belongs to the venom protein 11 family. 01 (wap-1) subfamily. In terms of processing, contains 5 disulfide bonds. As to expression, expressed by the venom gland.

It localises to the secreted. In terms of biological role, has antibacterial activity. This chain is U14-lycotoxin-Ls1b, found in Lycosa singoriensis (Wolf spider).